Consider the following 1091-residue polypeptide: Error-prone DNA polymerase (1091 aa).

A disordered region spans residues 1–51 (MGWSNGPPSWAEMERVLNGKPRHAGVPAFDADGDVPRSRKRGAYQPPGRER).

The protein belongs to the DNA polymerase type-C family. DnaE2 subfamily.

The protein localises to the cytoplasm. It carries out the reaction DNA(n) + a 2'-deoxyribonucleoside 5'-triphosphate = DNA(n+1) + diphosphate. DNA polymerase involved in damage-induced mutagenesis and translesion synthesis (TLS). It is not the major replicative DNA polymerase. The sequence is that of Error-prone DNA polymerase from Mycobacterium bovis (strain ATCC BAA-935 / AF2122/97).